Reading from the N-terminus, the 57-residue chain is Small ribosomal subunit protein bS21 (57 aa).

Residues 35–57 are disordered; the sequence is REFYEKPSVRRKKKSEAARKRKY. The span at 43–57 shows a compositional bias: basic residues; the sequence is VRRKKKSEAARKRKY.

It belongs to the bacterial ribosomal protein bS21 family.

The polypeptide is Small ribosomal subunit protein bS21 (Bacillus licheniformis (strain ATCC 14580 / DSM 13 / JCM 2505 / CCUG 7422 / NBRC 12200 / NCIMB 9375 / NCTC 10341 / NRRL NRS-1264 / Gibson 46)).